The following is a 147-amino-acid chain: Large ribosomal subunit protein bL9 (147 aa).

It belongs to the bacterial ribosomal protein bL9 family.

Binds to the 23S rRNA. This is Large ribosomal subunit protein bL9 from Campylobacter jejuni subsp. jejuni serotype O:6 (strain 81116 / NCTC 11828).